The chain runs to 207 residues: 2,3-bisphosphoglycerate-dependent phosphoglycerate mutase (207 aa).

Substrate contacts are provided by residues 10-17 (RHGQSEWN), 23-24 (TG), R62, 89-92 (ERDY), K100, 116-117 (RR), and 160-161 (GN). The active-site Tele-phosphohistidine intermediate is H11. E89 functions as the Proton donor/acceptor in the catalytic mechanism.

Belongs to the phosphoglycerate mutase family. BPG-dependent PGAM subfamily. As to quaternary structure, homodimer.

The catalysed reaction is (2R)-2-phosphoglycerate = (2R)-3-phosphoglycerate. The protein operates within carbohydrate degradation; glycolysis; pyruvate from D-glyceraldehyde 3-phosphate: step 3/5. Its function is as follows. Catalyzes the interconversion of 2-phosphoglycerate and 3-phosphoglycerate. The chain is 2,3-bisphosphoglycerate-dependent phosphoglycerate mutase from Nitrobacter winogradskyi (strain ATCC 25391 / DSM 10237 / CIP 104748 / NCIMB 11846 / Nb-255).